We begin with the raw amino-acid sequence, 293 residues long: MPIELAMSLYLSSDEFLNPRASKYSRPLQPCLNQCKSSKLSFSSLKEQSEFNGVSRALMIPGRAKKHVSFADHKGLALTVVKIFSEFDDPIDIPDNIDNFFTSSLTVSEGKDKLTLDFDQPSADYLKFRQRIENDHVCLEHCMLKEKSIMGTVKVKNISFEKSVKLRITFNTWKNHTDVECQYVKDTYTGSNRDTFSFEASLPEQVPSHERIEFAICYEVNGDTLWDNNQGKNYRIIQSALRKSSNESNGGHQQYSQSDWDIHFDRYGSPRCSRGIFPHWPSYVGYEDIGPYY.

The 109-residue stretch at 129-237 (RQRIENDHVC…NNQGKNYRII (109 aa)) folds into the CBM21 domain.

Interacts with glycogen, PPP1CC catalytic subunit of PP1 and PYGL. Associates with glycogen particles. Forms complexes with debranching enzyme, glycogen phosphorylase, glycogen synthase and phosphorylase kinase which is necessary for its regulation of PP1 activity.

Acts as a glycogen-targeting subunit for phosphatase PP1. Facilitates interaction of the PP1 with enzymes of the glycogen metabolism and regulates its activity. Suppresses the rate at which PP1 dephosphorylates (inactivates) glycogen phosphorylase and enhances the rate at which it activates glycogen synthase and therefore limits glycogen breakdown. This is Protein phosphatase 1 regulatory subunit 3B (ppp1r3b) from Danio rerio (Zebrafish).